The following is a 208-amino-acid chain: Uracil phosphoribosyltransferase (208 aa).

5-phospho-alpha-D-ribose 1-diphosphate contacts are provided by residues R78, R103, and 130-138; that span reads DPMLATGGS. Uracil-binding positions include I193 and 198–200; that span reads GDA. Position 199 (D199) interacts with 5-phospho-alpha-D-ribose 1-diphosphate.

This sequence belongs to the UPRTase family. The cofactor is Mg(2+).

It carries out the reaction UMP + diphosphate = 5-phospho-alpha-D-ribose 1-diphosphate + uracil. Its pathway is pyrimidine metabolism; UMP biosynthesis via salvage pathway; UMP from uracil: step 1/1. Allosterically activated by GTP. Functionally, catalyzes the conversion of uracil and 5-phospho-alpha-D-ribose 1-diphosphate (PRPP) to UMP and diphosphate. This is Uracil phosphoribosyltransferase from Neisseria meningitidis serogroup B (strain ATCC BAA-335 / MC58).